The following is a 256-amino-acid chain: MNNAIFPNKFKAALAAQQVQIGCWSALASPITTEVLGLAGFDWLVLDGEHAPNDVTTLIPQLMALKGSASAPVVRVPTNEPVIIKRMLDIGFYNFLIPFVETQEEAARAVASTRYPPEGIRGVSVSHRANMFGTVPDYFAQSNKNITIIVQIESQLGVDNVDAIAATEGVDGIFVGPSDLAAALSHLGNASHPDVQQTIQHIFARAKAHGKPCGILAPVEADARRYLEWGATFVAVGSDLGAFRASTQKLADTFKK.

The active-site Proton acceptor is the histidine 50. Glutamine 151 is a substrate binding site. Glutamate 153 provides a ligand contact to Mg(2+). Substrate-binding residues include serine 178 and aspartate 179. Aspartate 179 serves as a coordination point for Mg(2+).

Belongs to the HpcH/HpaI aldolase family. KDGluc aldolase subfamily. As to quaternary structure, homohexamer; trimer of dimers. It depends on Mg(2+) as a cofactor.

The enzyme catalyses 5-dehydro-4-deoxy-D-glucarate = 2-hydroxy-3-oxopropanoate + pyruvate. It catalyses the reaction 2-dehydro-3-deoxy-D-glucarate = 2-hydroxy-3-oxopropanoate + pyruvate. The protein operates within carbohydrate acid metabolism; galactarate degradation; D-glycerate from galactarate: step 2/3. In terms of biological role, catalyzes the reversible retro-aldol cleavage of both 5-keto-4-deoxy-D-glucarate and 2-keto-3-deoxy-D-glucarate to pyruvate and tartronic semialdehyde. This chain is 5-keto-4-deoxy-D-glucarate aldolase, found in Salmonella gallinarum (strain 287/91 / NCTC 13346).